Here is a 294-residue protein sequence, read N- to C-terminus: Light-independent protochlorophyllide reductase iron-sulfur ATP-binding protein (294 aa).

Residues 10-15 (GIGKST) and Lys-39 contribute to the ATP site. Ser-14 contributes to the Mg(2+) binding site. 2 residues coordinate [4Fe-4S] cluster: Cys-95 and Cys-129. ATP is bound at residue 180-181 (NR).

Belongs to the NifH/BchL/ChlL family. As to quaternary structure, homodimer. Protochlorophyllide reductase is composed of three subunits; ChlL, ChlN and ChlB. The cofactor is [4Fe-4S] cluster.

It localises to the plastid. The protein resides in the chloroplast. It carries out the reaction chlorophyllide a + oxidized 2[4Fe-4S]-[ferredoxin] + 2 ADP + 2 phosphate = protochlorophyllide a + reduced 2[4Fe-4S]-[ferredoxin] + 2 ATP + 2 H2O. It participates in porphyrin-containing compound metabolism; chlorophyll biosynthesis (light-independent). Component of the dark-operative protochlorophyllide reductase (DPOR) that uses Mg-ATP and reduced ferredoxin to reduce ring D of protochlorophyllide (Pchlide) to form chlorophyllide a (Chlide). This reaction is light-independent. The L component serves as a unique electron donor to the NB-component of the complex, and binds Mg-ATP. This is Light-independent protochlorophyllide reductase iron-sulfur ATP-binding protein from Pleurastrum terricola (Filamentous green alga).